The sequence spans 570 residues: Pentatricopeptide repeat-containing protein At1g31430 (570 aa).

PPR repeat units follow at residues 10–44, 45–79, 80–110, 111–141, 147–177, 181–215, 216–242, 243–277, 278–312, 313–343, 344–378, 379–414, and 415–449; these read SLLM…GLYP, DNFT…GLEF, DSYV…MPQR, DVVS…MSQE, DEGT…VVTE, SVRI…NVKC, WTSM…SPVK, DVVL…GIRP, DNFV…RVTV, DKVV…IKER, DTAS…GVRL, DAIT…NVQP, and KSEH…SDET. Residues 453 to 528 form a type E motif region; it reads VYCSLLSAAR…FPGCSSIEID (76 aa). The type E(+) motif stretch occupies residues 529 to 561; the sequence is GVGHEFIVGDDLLSHPKMDEINSMLHQTTNLML.

It belongs to the PPR family. PCMP-E subfamily.

In Arabidopsis thaliana (Mouse-ear cress), this protein is Pentatricopeptide repeat-containing protein At1g31430 (PCMP-E55).